Consider the following 258-residue polypeptide: Small ribosomal subunit protein uS2 (258 aa).

The tract at residues 227–258 is disordered; the sequence is GEQFAPASEQKEEVKTQEVQEVEDSNDDVIDD. Residues 235–244 show a composition bias toward basic and acidic residues; that stretch reads EQKEEVKTQE. Acidic residues predominate over residues 246–258; sequence QEVEDSNDDVIDD.

Belongs to the universal ribosomal protein uS2 family.

This is Small ribosomal subunit protein uS2 from Caldicellulosiruptor saccharolyticus (strain ATCC 43494 / DSM 8903 / Tp8T 6331).